Reading from the N-terminus, the 333-residue chain is MSLTLINVLAAALIALAFVAVNAAYLVWAERRGAAFIQRRLGPVENGPWGLLQPPVDGIKLMTKQLVIPGGVDKILFMVAPVLAMFPALMSFVTIPFSENIVAHNMDIGLLVILAFASFAGLAILLAGWSSRNKYSMMAAIRAVSQTIAYEIPMLITAITVVLVSGSVDFIEIVHSQSGGFWHWNLWPLKPGLFNIFMPISFLIFFICSLAETNRAPFDLGEAESELVAGFHTEYSSMGFGLFFMGEYANIVIGACLTTLLFLGGWDCPFGLFPGVWWFLIKIYILIFTFIWIRWTFPRTTIYGLLNLSWKILIPLSLINLLLTAGFIKVFAP.

The next 8 helical transmembrane spans lie at 8-28 (VLAA…YLVW), 75-95 (ILFM…FVTI), 108-128 (IGLL…LLAG), 154-174 (MLIT…IEIV), 191-211 (PGLF…CSLA), 251-271 (IVIG…CPFG), 273-293 (FPGV…FIWI), and 312-332 (ILIP…KVFA).

Belongs to the complex I subunit 1 family. As to quaternary structure, NDH-1 is composed of 14 different subunits. Subunits NuoA, H, J, K, L, M, N constitute the membrane sector of the complex.

Its subcellular location is the cell inner membrane. It carries out the reaction a quinone + NADH + 5 H(+)(in) = a quinol + NAD(+) + 4 H(+)(out). Its function is as follows. NDH-1 shuttles electrons from NADH, via FMN and iron-sulfur (Fe-S) centers, to quinones in the respiratory chain. The immediate electron acceptor for the enzyme in this species is believed to be ubiquinone. Couples the redox reaction to proton translocation (for every two electrons transferred, four hydrogen ions are translocated across the cytoplasmic membrane), and thus conserves the redox energy in a proton gradient. This subunit may bind ubiquinone. The polypeptide is NADH-quinone oxidoreductase subunit H (Desulfotalea psychrophila (strain LSv54 / DSM 12343)).